We begin with the raw amino-acid sequence, 373 residues long: S-adenosylmethionine:tRNA ribosyltransferase-isomerase (373 aa).

This sequence belongs to the QueA family. Monomer.

It localises to the cytoplasm. The enzyme catalyses 7-aminomethyl-7-carbaguanosine(34) in tRNA + S-adenosyl-L-methionine = epoxyqueuosine(34) in tRNA + adenine + L-methionine + 2 H(+). It participates in tRNA modification; tRNA-queuosine biosynthesis. Transfers and isomerizes the ribose moiety from AdoMet to the 7-aminomethyl group of 7-deazaguanine (preQ1-tRNA) to give epoxyqueuosine (oQ-tRNA). The protein is S-adenosylmethionine:tRNA ribosyltransferase-isomerase of Prochlorococcus marinus (strain MIT 9515).